Reading from the N-terminus, the 249-residue chain is Flavin-dependent thymidylate synthase (249 aa).

A ThyX domain is found at 7 to 235 (LDVQLIAATA…PVLFDDFHIT (229 aa)). Residues 94 to 97 (ELVR), 105 to 109 (QLSQR), and Arg174 each bind dUMP. Residues 97 to 99 (RHR) and Gln105 contribute to the FAD site. The short motif at 97–107 (RHRHFSFSQLS) is the ThyX motif element. FAD contacts are provided by residues 190–192 (NYR) and His196. Arg201 serves as a coordination point for dUMP. Residue Arg201 is the Involved in ionization of N3 of dUMP, leading to its activation of the active site.

It belongs to the thymidylate synthase ThyX family. As to quaternary structure, homotetramer. The cofactor is FAD.

The catalysed reaction is dUMP + (6R)-5,10-methylene-5,6,7,8-tetrahydrofolate + NADPH + H(+) = dTMP + (6S)-5,6,7,8-tetrahydrofolate + NADP(+). The protein operates within pyrimidine metabolism; dTTP biosynthesis. Its function is as follows. Catalyzes the reductive methylation of 2'-deoxyuridine-5'-monophosphate (dUMP) to 2'-deoxythymidine-5'-monophosphate (dTMP) while utilizing 5,10-methylenetetrahydrofolate (mTHF) as the methyl donor, and NADPH and FADH(2) as the reductant. In Corynebacterium aurimucosum (strain ATCC 700975 / DSM 44827 / CIP 107346 / CN-1) (Corynebacterium nigricans), this protein is Flavin-dependent thymidylate synthase.